The primary structure comprises 346 residues: Protein RecA (346 aa).

68–75 (GPESSGKT) lines the ATP pocket.

The protein belongs to the RecA family.

It is found in the cytoplasm. Its function is as follows. Can catalyze the hydrolysis of ATP in the presence of single-stranded DNA, the ATP-dependent uptake of single-stranded DNA by duplex DNA, and the ATP-dependent hybridization of homologous single-stranded DNAs. It interacts with LexA causing its activation and leading to its autocatalytic cleavage. This chain is Protein RecA, found in Heliobacterium modesticaldum (strain ATCC 51547 / Ice1).